Consider the following 1113-residue polypeptide: Coiled-coil domain-containing protein 158 (1113 aa).

Polar residues predominate over residues 1-14; sequence MESKAWESNNEDLL. The segment at 1–26 is disordered; it reads MESKAWESNNEDLLSSSGVTSNGGSS. A compositionally biased stretch (low complexity) spans 15-26; the sequence is SSSGVTSNGGSS. Coiled-coil stretches lie at residues 72–183 and 243–833; these read GKEH…LSHE and VEDQ…QEQE. Disordered stretches follow at residues 848-902 and 955-1062; these read LQGP…DPTR and CHRS…IETT. 5 stretches are compositionally biased toward polar residues: residues 867 to 894, 955 to 974, 994 to 1017, 1024 to 1040, and 1053 to 1062; these read ASVTRSHSNVPSSQSTASFLSHHSTKAN, CHRSNNSLRDSTEGSKSSET, FTFTSAASPSVKNSASRSFNSSPK, LLTSSVEGSIGSTSQYR, and DSQSPPIETT. The stretch at 1061 to 1113 forms a coiled coil; the sequence is TTGKTCRKLQNRLESLQTLVEDLQLKNQAMSSMIRNQEKRIQKVKDQEKMLLK.

This Homo sapiens (Human) protein is Coiled-coil domain-containing protein 158 (CCDC158).